We begin with the raw amino-acid sequence, 199 residues long: Chromophore lyase CpcT/CpeT (199 aa).

It belongs to the CpcT/CpeT biliprotein lyase family.

Functionally, covalently attaches a chromophore to Cys residue(s) of phycobiliproteins. This chain is Chromophore lyase CpcT/CpeT, found in Prochlorococcus marinus (strain NATL1A).